Reading from the N-terminus, the 392-residue chain is Alanine--glyoxylate aminotransferase (392 aa).

Residue threonine 9 is modified to Phosphothreonine. Lysine 209 carries the N6-(pyridoxal phosphate)lysine modification. N6-acetyllysine; alternate is present on lysine 225. Lysine 225 bears the N6-succinyllysine; alternate mark. An N6-acetyllysine mark is found at lysine 234 and lysine 312. Position 360 (arginine 360) interacts with substrate.

It belongs to the class-V pyridoxal-phosphate-dependent aminotransferase family. In terms of assembly, homodimer. Pyridoxal 5'-phosphate is required as a cofactor. As to expression, liver.

It is found in the peroxisome. It carries out the reaction L-serine + pyruvate = 3-hydroxypyruvate + L-alanine. It catalyses the reaction glyoxylate + L-alanine = glycine + pyruvate. With respect to regulation, alanine--glyoxylate aminotransferase activity is inhibited by 1 mM (aminooxy)acetic acid by 97.5%. Peroxisomal aminotransferase that catalyzes the transamination of glyoxylate to glycine and contributes to the glyoxylate detoxification. Also catalyzes the transamination between L-serine and pyruvate and contributes to gluconeogenesis from the L-serine metabolism. The protein is Alanine--glyoxylate aminotransferase of Homo sapiens (Human).